We begin with the raw amino-acid sequence, 187 residues long: Interferon alpha-1/2 (187 aa).

The signal sequence occupies residues 1-23 (MALPCSFSVALVLLSCHSLCCLA). Intrachain disulfides connect C24–C122 and C52–C160. N101 carries N-linked (GlcNAc...) asparagine glycosylation.

The protein belongs to the alpha/beta interferon family.

It is found in the secreted. Its function is as follows. Produced by macrophages, IFN-alpha have antiviral activities. Interferon stimulates the production of two enzymes: a protein kinase and an oligoadenylate synthetase. This chain is Interferon alpha-1/2, found in Canis lupus familiaris (Dog).